The chain runs to 231 residues: Probable tetraspanin tspE (231 aa).

Topologically, residues 1–21 (MTFVDNFEFNQNTPRLVRGPF) are cytoplasmic. A helical transmembrane segment spans residues 22–42 (IILNSIIFSLSFILLCSTGII). The Extracellular portion of the chain corresponds to 43-58 (IYYLNEYYLVKDLTIP). Residues 59-79 (LGSFILSAYMVITTIVGGIAI) form a helical membrane-spanning segment. Over 80–83 (WKKK) the chain is Cytoplasmic. Residues 84 to 104 (LGLHLTFMVFLVVLIVCLVGV) traverse the membrane as a helical segment. Topologically, residues 105–195 (SAKMIVDSGN…VESILKYLGY (91 aa)) are extracellular. Residues 196–216 (YGIVLSVIELILLILSGFFLL) form a helical membrane-spanning segment. Residues 217–231 (KTNKNVKSKSFILQD) lie on the Cytoplasmic side of the membrane.

Belongs to the tetraspanin (TM4SF) family.

The protein localises to the membrane. The protein is Probable tetraspanin tspE (tspE) of Dictyostelium discoideum (Social amoeba).